The following is a 99-amino-acid chain: Malonate decarboxylase acyl carrier protein (99 aa).

The residue at position 25 (serine 25) is an O-(phosphoribosyl dephospho-coenzyme A)serine.

The protein belongs to the MdcC family. Covalently binds the prosthetic group of malonate decarboxylase.

Its subcellular location is the cytoplasm. Its function is as follows. Subunit of malonate decarboxylase, it is an acyl carrier protein to which acetyl and malonyl thioester residues are bound via a 2'-(5''-phosphoribosyl)-3'-dephospho-CoA prosthetic group and turn over during the catalytic mechanism. The chain is Malonate decarboxylase acyl carrier protein from Azotobacter vinelandii (strain DJ / ATCC BAA-1303).